Here is a 307-residue protein sequence, read N- to C-terminus: Homoserine kinase (307 aa).

Position 95–105 (95–105 (PQSRGLGSSAS)) interacts with ATP.

It belongs to the GHMP kinase family. Homoserine kinase subfamily.

It is found in the cytoplasm. It catalyses the reaction L-homoserine + ATP = O-phospho-L-homoserine + ADP + H(+). It functions in the pathway amino-acid biosynthesis; L-threonine biosynthesis; L-threonine from L-aspartate: step 4/5. Catalyzes the ATP-dependent phosphorylation of L-homoserine to L-homoserine phosphate. The protein is Homoserine kinase of Corynebacterium aurimucosum (strain ATCC 700975 / DSM 44827 / CIP 107346 / CN-1) (Corynebacterium nigricans).